The chain runs to 184 residues: UPF0149 protein PputW619_5026 (184 aa).

Belongs to the UPF0149 family.

In Pseudomonas putida (strain W619), this protein is UPF0149 protein PputW619_5026.